The chain runs to 891 residues: MGALLLHPSRRGPAGVVASWTSSPAGRDGGVGIAGAWYFPRASSQAREMPQCPTLESQEGENSEEKGDSSKEDPKETVALAFVRENPGAQNGLQNAQQQGKKKRKKKRLVINLSSCRYESVRRAAQQYGFREGGEDDDWTLYWTDYSVSLERVMEMKSYQKINHFPGMSEICRKDLLARNMSRMLKMFPKDFRFFPRTWCLPADWGDLQTYSRSRKNKTYICKPDSGCQGKGIFITRTVKEIKPGEDMICQLYISKPFIIDGFKFDLRIYVLVTSCDPLRIFVYNEGLARFATTSYSRPCTDNLDDICMHLTNYSINKHSSNFSRDAHSGSKRKLSTFSAYLEDHSYNVEQIWRDIEDVIIKTLISAHPIIRHNYHTCFPNHTLNSACFEILGFDILLDHKLKPWLLEVNHSPSFSTDSRLDKEVKDGLLYDTLVLINLESCDKKKVLEEERQRGQFLQQCCSREMRIEEAKGFRAVQLKKTETYEKENCGGFRLIYPSLNSEKYEKFFQDNNSLFQNTVASRAREEYARQLIQELRLKREKKPFQMKKKVEMQGESAGEQVRKKGMRGWQQKQQQKDKAATQASKQYIQPLTLVSYTPDLLLSVRGERKNETDSSLNQEAPTEEASSVFPKLTSAKPFSSLPDLRNINLSSSKLEPSKPNFSIKEAKSASAVNVFTGTVHLTSVETTPESTTQLSISPKSPPTLAVTASSEYSGPETDRVVSFKCKKQQTPPHLTQKKMLKSFLPTKSKSFWESPNTNWTLLKSDMNKPHLISELLTKLQLSGKLSFFPAHYNPKLGMNNLSQNPSLPGECHSRSDSSGEKRQLDVSSLLLQSPQSYNVTLRDLLVIATPAQLDPRPCRSHASAMRDPCMQDQEAYSHCLISGQKGCERS.

2 disordered regions span residues 1-25 and 44-106; these read MGALLLHPSRRGPAGVVASWTSSPA and SQAR…KRKK. Residues 63 to 76 are compositionally biased toward basic and acidic residues; it reads SEEKGDSSKEDPKE. Over residues 88–99 the composition is skewed to low complexity; that stretch reads GAQNGLQNAQQQ. The region spanning 106–449 is the TTL domain; sequence KKRLVINLSS…ESCDKKKVLE (344 aa). Residues Lys-223, 229 to 230, 251 to 254, and 264 to 266 each bind ATP; these read QG, QLYI, and KFD. Gln-229 serves as a coordination point for a protein. Arg-290 is an L-glutamate binding site. 312 to 313 is a binding site for ATP; that stretch reads TN. Residues Tyr-314, Ser-315, and Lys-332 each coordinate L-glutamate. Mg(2+) is bound by residues Asp-395, Glu-408, and Asn-410. His-411 contacts a protein. The tract at residues 420 to 499 is c-MTBD region; sequence RLDKEVKDGL…CGGFRLIYPS (80 aa). L-glutamate is bound at residue Lys-426. 4 disordered regions span residues 546-584, 607-636, 687-711, and 800-820; these read QMKKKVEMQGESAGEQVRKKGMRGWQQKQQQKDKAATQA, GERKNETDSSLNQEAPTEEASSVFPKLTSA, TTPESTTQLSISPKSPPTLAVTASS, and NNLSQNPSLPGECHSRSDSSG. A compositionally biased stretch (polar residues) spans 687-699; sequence TTPESTTQLSISP.

The protein belongs to the tubulin--tyrosine ligase family. As to quaternary structure, found in a complex with CEP41. Requires Mg(2+) as cofactor.

It localises to the cytoplasm. The protein resides in the cytoskeleton. Its subcellular location is the cilium axoneme. The protein localises to the cilium basal body. The catalysed reaction is L-glutamyl-[protein] + L-glutamate + ATP = gamma-L-glutamyl-L-glutamyl-[protein] + ADP + phosphate + H(+). It catalyses the reaction (L-glutamyl)(n)-gamma-L-glutamyl-L-glutamyl-[protein] + L-glutamate + ATP = (L-glutamyl)(n+1)-gamma-L-glutamyl-L-glutamyl-[protein] + ADP + phosphate + H(+). Functionally, polyglutamylase which modifies both tubulin and non-tubulin proteins, generating alpha-linked polyglutamate side chains on the gamma-carboxyl group of specific glutamate residues of target proteins. Preferentially mediates ATP-dependent long polyglutamate chain elongation over the initiation step of the polyglutamylation reaction. Preferentially modifies the alpha-tubulin tail over a beta-tail. Promotes tubulin polyglutamylation which stimulates spastin/SPAST-mediated microtubule severing, thereby regulating microtubule functions. Mediates microtubule polyglutamylation in primary cilia axoneme, which is important for ciliary structural formation and motility. Mediates microtubule polyglutamylation in motile cilia, necessary for the regulation of ciliary coordinated beating. Polyglutamylates non-tubulin protein nucleotidyltransferase CGAS, leading to CGAS DNA-binding inhibition, thereby preventing antiviral defense response. The polypeptide is Tubulin polyglutamylase TTLL6 (Homo sapiens (Human)).